The primary structure comprises 401 residues: ATP phosphoribosyltransferase regulatory subunit (401 aa).

Belongs to the class-II aminoacyl-tRNA synthetase family. HisZ subfamily. As to quaternary structure, heteromultimer composed of HisG and HisZ subunits.

It is found in the cytoplasm. It participates in amino-acid biosynthesis; L-histidine biosynthesis; L-histidine from 5-phospho-alpha-D-ribose 1-diphosphate: step 1/9. Required for the first step of histidine biosynthesis. May allow the feedback regulation of ATP phosphoribosyltransferase activity by histidine. In Cyanothece sp. (strain PCC 7425 / ATCC 29141), this protein is ATP phosphoribosyltransferase regulatory subunit.